The sequence spans 309 residues: Oxygen-dependent coproporphyrinogen-III oxidase (309 aa).

Serine 100 contributes to the substrate binding site. A divalent metal cation contacts are provided by histidine 104 and histidine 114. Histidine 114 serves as the catalytic Proton donor. 116 to 118 (NVR) contacts substrate. Residues histidine 153 and histidine 183 each coordinate a divalent metal cation. The segment at 248 to 283 (YAEFNLVYDRGTLFGLQSGGRTESILMSLPPIVHWE) is important for dimerization. 266 to 268 (GGR) contacts substrate.

This sequence belongs to the aerobic coproporphyrinogen-III oxidase family. In terms of assembly, homodimer. Requires a divalent metal cation as cofactor.

The protein localises to the cytoplasm. It catalyses the reaction coproporphyrinogen III + O2 + 2 H(+) = protoporphyrinogen IX + 2 CO2 + 2 H2O. Its pathway is porphyrin-containing compound metabolism; protoporphyrin-IX biosynthesis; protoporphyrinogen-IX from coproporphyrinogen-III (O2 route): step 1/1. Functionally, involved in the heme biosynthesis. Catalyzes the aerobic oxidative decarboxylation of propionate groups of rings A and B of coproporphyrinogen-III to yield the vinyl groups in protoporphyrinogen-IX. This is Oxygen-dependent coproporphyrinogen-III oxidase from Legionella pneumophila (strain Lens).